A 699-amino-acid chain; its full sequence is Probable xyloglucan glycosyltransferase 12 (699 aa).

2 helical membrane passes run 126 to 146 (CLKV…AAYF) and 194 to 214 (IVLF…CFWI). D280 is an active-site residue. Residues D339 and D341 each coordinate substrate. D433 is an active-site residue. The next 2 membrane-spanning stretches (helical) occupy residues 511 to 531 (LILP…TMFV) and 536 to 556 (LPAW…ILPA). The segment at 616–646 (EKTTKHQRGVSAPETEAEKKAEKTKRKKKKH) is disordered. Residues K617 and K620 each participate in a glycyl lysine isopeptide (Lys-Gly) (interchain with G-Cter in ubiquitin) cross-link. S626 carries the post-translational modification Phosphoserine. The segment covering 637–646 (EKTKRKKKKH) has biased composition (basic residues). The next 2 membrane-spanning stretches (helical) occupy residues 649 to 668 (IYMK…TRSL) and 674 to 694 (IHFY…LDLI).

Belongs to the glycosyltransferase 2 family. Plant cellulose synthase-like C subfamily. Homodimer. In terms of tissue distribution, mainly expressed in roots, flowers and seeds, and, at very low levels, in seedlings, leaves and stems.

It localises to the golgi apparatus membrane. In terms of biological role, probable beta-1,4-glucan synthase rather involved in the synthesis of the xyloglucan backbone than cellulose. Seems to work simultaneously with xyloglucan 6-xylosyltransferase. Xyloglucan is a noncellulosic polysaccharides of plant cell wall and consists of a glucan backbone substituted by xylose, galactose and fucose. This chain is Probable xyloglucan glycosyltransferase 12, found in Arabidopsis thaliana (Mouse-ear cress).